A 244-amino-acid polypeptide reads, in one-letter code: 1-(5-phosphoribosyl)-5-[(5-phosphoribosylamino)methylideneamino] imidazole-4-carboxamide isomerase (244 aa).

D8 serves as the catalytic Proton acceptor. D129 functions as the Proton donor in the catalytic mechanism.

It belongs to the HisA/HisF family.

The protein resides in the cytoplasm. It catalyses the reaction 1-(5-phospho-beta-D-ribosyl)-5-[(5-phospho-beta-D-ribosylamino)methylideneamino]imidazole-4-carboxamide = 5-[(5-phospho-1-deoxy-D-ribulos-1-ylimino)methylamino]-1-(5-phospho-beta-D-ribosyl)imidazole-4-carboxamide. The protein operates within amino-acid biosynthesis; L-histidine biosynthesis; L-histidine from 5-phospho-alpha-D-ribose 1-diphosphate: step 4/9. This is 1-(5-phosphoribosyl)-5-[(5-phosphoribosylamino)methylideneamino] imidazole-4-carboxamide isomerase from Allorhizobium ampelinum (strain ATCC BAA-846 / DSM 112012 / S4) (Agrobacterium vitis (strain S4)).